An 813-amino-acid chain; its full sequence is Homeobox-leucine zipper protein ROC4 (813 aa).

The tract at residues Glu62–Thr112 is disordered. Basic residues predominate over residues Pro101 to Thr112. The homeobox DNA-binding region spans Arg104–Leu163. Residues Phe152–Asn191 are a coiled coil. The START domain occupies Ala306 to Leu559.

This sequence belongs to the HD-ZIP homeobox family. Class IV subfamily.

It is found in the nucleus. Probable transcription factor. In Oryza sativa subsp. japonica (Rice), this protein is Homeobox-leucine zipper protein ROC4 (ROC4).